Consider the following 111-residue polypeptide: Small ribosomal subunit protein mS38 (111 aa).

The span at 82–99 shows a compositional bias: basic residues; it reads RKRKKKMKKHKLRKRRKR. Positions 82–111 are disordered; that stretch reads RKRKKKMKKHKLRKRRKREKAERRKLSQGR. The span at 100–111 shows a compositional bias: basic and acidic residues; sequence EKAERRKLSQGR.

This sequence belongs to the mitochondrion-specific ribosomal protein mS38 family. As to quaternary structure, component of the mitochondrial small ribosomal subunit (mt-SSU). Mature yeast 74S mitochondrial ribosomes consist of a small (37S) and a large (54S) subunit. The 37S small subunit contains a 15S ribosomal RNA (15S mt-rRNA) and 34 different proteins. The 54S large subunit contains a 21S rRNA (21S mt-rRNA) and 46 different proteins.

Its subcellular location is the mitochondrion. The protein resides in the mitochondrion inner membrane. Component of the mitochondrial ribosome (mitoribosome), a dedicated translation machinery responsible for the synthesis of mitochondrial genome-encoded proteins, including at least some of the essential transmembrane subunits of the mitochondrial respiratory chain. The mitoribosomes are attached to the mitochondrial inner membrane and translation products are cotranslationally integrated into the membrane. mS38 is also involved in the splicing of the COX1 mRNA. The chain is Small ribosomal subunit protein mS38 (QRI5) from Saccharomyces cerevisiae (strain ATCC 204508 / S288c) (Baker's yeast).